The following is a 256-amino-acid chain: Zinc metalloprotease (256 aa).

The active-site Proton donor is the His-74.

The protein belongs to the peptidase M4 family. It depends on Zn(2+) as a cofactor.

It is found in the secreted. May play a role in ulcer formation. Proteolytic digestion of gastric mucus has been suggested as an important mechanism by which its pathogenicity is at least partly exerted. The protein is Zinc metalloprotease (hap) of Helicobacter pylori (Campylobacter pylori).